Here is a 379-residue protein sequence, read N- to C-terminus: Cytochrome b (379 aa).

8 consecutive transmembrane segments (helical) span residues 33–53 (FGSL…FLAM), 77–98 (WLIR…FLHV), 113–133 (WNIG…GYVL), 178–198 (FFAF…VHLL), 226–246 (IKDV…VLFS), 288–308 (LGGV…PILH), 320–340 (LSQC…WIGG), and 347–367 (FITI…LALP). Residues His-83 and His-97 each coordinate heme b. Heme b-binding residues include His-182 and His-196.

It belongs to the cytochrome b family. The cytochrome bc1 complex contains 11 subunits: 3 respiratory subunits (MT-CYB, CYC1 and UQCRFS1), 2 core proteins (UQCRC1 and UQCRC2) and 6 low-molecular weight proteins (UQCRH/QCR6, UQCRB/QCR7, UQCRQ/QCR8, UQCR10/QCR9, UQCR11/QCR10 and a cleavage product of UQCRFS1). This cytochrome bc1 complex then forms a dimer. Heme b is required as a cofactor.

It localises to the mitochondrion inner membrane. Its function is as follows. Component of the ubiquinol-cytochrome c reductase complex (complex III or cytochrome b-c1 complex) that is part of the mitochondrial respiratory chain. The b-c1 complex mediates electron transfer from ubiquinol to cytochrome c. Contributes to the generation of a proton gradient across the mitochondrial membrane that is then used for ATP synthesis. The protein is Cytochrome b (MT-CYB) of Sciurus niger (Eastern fox squirrel).